The following is a 585-amino-acid chain: NADP-reducing hydrogenase subunit HndD (585 aa).

Residues 2–85 form the 2Fe-2S ferredoxin-type domain; that stretch reads SMLTITIDGK…NMVVKTNSLR (84 aa). 4 residues coordinate [2Fe-2S] cluster: C36, C52, C55, and C69. The region spanning 85-124 is the 4Fe-4S His(Cys)3-ligated-type domain; the sequence is RVLNARRTVLELLLSDHPKDCLVCAKSGECELQTLAERFG. [4Fe-4S] cluster contacts are provided by H101, C105, C108, and C114. 4Fe-4S ferredoxin-type domains follow at residues 144–174 and 185–216; these read ASII…VLSG and PAFE…EHEY.

In terms of assembly, heterotetramer composed of HndA, HndB, HndC and HndD subunits. HndD is probably the hydrogenase subunit. It depends on [4Fe-4S] cluster as a cofactor.

It carries out the reaction H2 + NADP(+) = NADPH + H(+). Inhibited by oxygen. Catalyzes the reduction of NADP in the presence of molecular H(2) to yield NADPH. The sequence is that of NADP-reducing hydrogenase subunit HndD (hndD) from Solidesulfovibrio fructosivorans (Desulfovibrio fructosivorans).